We begin with the raw amino-acid sequence, 361 residues long: Ribosomal RNA large subunit methyltransferase M (361 aa).

S-adenosyl-L-methionine-binding positions include Ser187, 220–223 (CPGG), Asp239, Asp259, and Asp276. Lys305 serves as the catalytic Proton acceptor.

This sequence belongs to the class I-like SAM-binding methyltransferase superfamily. RNA methyltransferase RlmE family. RlmM subfamily. As to quaternary structure, monomer.

Its subcellular location is the cytoplasm. The catalysed reaction is cytidine(2498) in 23S rRNA + S-adenosyl-L-methionine = 2'-O-methylcytidine(2498) in 23S rRNA + S-adenosyl-L-homocysteine + H(+). Catalyzes the 2'-O-methylation at nucleotide C2498 in 23S rRNA. The polypeptide is Ribosomal RNA large subunit methyltransferase M (Shewanella putrefaciens (strain CN-32 / ATCC BAA-453)).